We begin with the raw amino-acid sequence, 151 residues long: UPF0178 protein YaiI (151 aa).

The protein belongs to the UPF0178 family.

In Salmonella paratyphi B (strain ATCC BAA-1250 / SPB7), this protein is UPF0178 protein YaiI.